The sequence spans 141 residues: Large ribosomal subunit protein uL22 (141 aa).

The tract at residues 110-141 (EEKKTVAKKTTTTKAPAKKTTSTKKATAKKES) is disordered. A compositionally biased stretch (low complexity) spans 117–134 (KKTTTTKAPAKKTTSTKK).

It belongs to the universal ribosomal protein uL22 family. In terms of assembly, part of the 50S ribosomal subunit.

Its function is as follows. This protein binds specifically to 23S rRNA; its binding is stimulated by other ribosomal proteins, e.g. L4, L17, and L20. It is important during the early stages of 50S assembly. It makes multiple contacts with different domains of the 23S rRNA in the assembled 50S subunit and ribosome. Functionally, the globular domain of the protein is located near the polypeptide exit tunnel on the outside of the subunit, while an extended beta-hairpin is found that lines the wall of the exit tunnel in the center of the 70S ribosome. In Campylobacter jejuni subsp. doylei (strain ATCC BAA-1458 / RM4099 / 269.97), this protein is Large ribosomal subunit protein uL22.